The chain runs to 98 residues: Peptides MS9.1 (98 aa).

An N-terminal signal peptide occupies residues 1-21 (MKQSLILAVLCLALVFATIEA). A propeptide spanning residues 22 to 27 (KPKADP) is cleaved from the precursor. 2 disulfides stabilise this stretch: Cys34/Cys46 and Cys37/Cys52. Propeptides lie at residues 63-64 (DP) and 92-98 (DPVRDAE).

It belongs to the sea anemone BBH family.

The protein localises to the secreted. The protein resides in the nematocyst. Acts as a positive modulator of mammalian TRPA1, a non-selective cation channel involved in detection of pain, in vitro yet has an analgesic and anti-inflammatory effect in vivo. The sequence is that of Peptides MS9.1 from Metridium senile (Brown sea anemone).